The primary structure comprises 139 residues: uncharacterized protein (139 aa).

Residues 19–73 (IRLRRTMLGMSQEKLGESLGITFQQIQKYEKGTNRVGASRLQNISQILNVPVSFF) form the HTH cro/C1-type domain. A DNA-binding region (H-T-H motif) is located at residues 30–49 (QEKLGESLGITFQQIQKYEK).

This is an uncharacterized protein from Rhizobium meliloti (strain 1021) (Ensifer meliloti).